Here is a 388-residue protein sequence, read N- to C-terminus: S-adenosylmethionine synthase (388 aa).

H16 contributes to the ATP binding site. Mg(2+) is bound at residue D18. Position 44 (E44) interacts with K(+). Residues E57 and Q100 each contribute to the L-methionine site. The segment at 100–110 (QSPDIAQGVNE) is flexible loop. ATP is bound by residues 167–169 (DGK), 233–234 (RF), D242, 248–249 (RK), and K269. D242 provides a ligand contact to L-methionine. K273 lines the L-methionine pocket.

The protein belongs to the AdoMet synthase family. As to quaternary structure, homotetramer; dimer of dimers. The cofactor is Mg(2+). K(+) serves as cofactor.

It is found in the cytoplasm. The catalysed reaction is L-methionine + ATP + H2O = S-adenosyl-L-methionine + phosphate + diphosphate. The protein operates within amino-acid biosynthesis; S-adenosyl-L-methionine biosynthesis; S-adenosyl-L-methionine from L-methionine: step 1/1. Functionally, catalyzes the formation of S-adenosylmethionine (AdoMet) from methionine and ATP. The overall synthetic reaction is composed of two sequential steps, AdoMet formation and the subsequent tripolyphosphate hydrolysis which occurs prior to release of AdoMet from the enzyme. This Desulfosudis oleivorans (strain DSM 6200 / JCM 39069 / Hxd3) (Desulfococcus oleovorans) protein is S-adenosylmethionine synthase.